The sequence spans 398 residues: Minor cardiolipin synthase ClsB (398 aa).

The helical transmembrane segment at 3 to 23 (VFIVIMIIVVIFFALILLDIF) threads the bilayer. PLD phosphodiesterase domains are found at residues 141–168 (MQKR…AEEY) and 311–338 (YQGF…DKRS).

It belongs to the phospholipase D family. Cardiolipin synthase subfamily.

It is found in the cell membrane. Its function is as follows. Involved in the biosynthesis of cardiolipin. The polypeptide is Minor cardiolipin synthase ClsB (clsB) (Bacillus subtilis (strain 168)).